The chain runs to 355 residues: Nematocyst expressed protein 3 (355 aa).

The N-terminal stretch at 1–18 (MKLTYILLIAVVGVAIEA) is a signal peptide. ShKT domains lie at 50-89 (CKDV…CKLC), 107-134 (QPQQ…CQLC), and 140-182 (SGPV…CNTY). Intrachain disulfides connect C50–C89, C57–C82, C71–C86, C116–C131, C149–C175, and C158–C179. The propeptide occupies 92-355 (KRSKKQSDYM…KKSKSHKKQH (264 aa)). The interval 202–355 (YQPNAMPTPP…KKSKSHKKQH (154 aa)) is disordered. The span at 207–221 (MPTPPQGVTPAPLPP) shows a compositional bias: pro residues. Composition is skewed to low complexity over residues 222–232 (YFQQQGYGYPQ), 240–270 (VQPG…TTTE), and 277–332 (TEAA…AQSD). Residues 335–355 (NKKKHKKDKAQKKSKSHKKQH) are compositionally biased toward basic residues.

It belongs to the NEP3 family. Nematocytes. In late planulae, transcripts are found throughout the ectoderm in nematocytes, with high concentration of expressing cells in the oral pole. In primary polyps, is expressed in nematocytes in the body wall and physa ectoderm and in the upper and lower pharynx.

Its subcellular location is the nematocyst. It is found in the secreted. Its function is as follows. Neurotoxin. In vivo, induces pronounced contraction and tail twitching on zebrafish larvae, as well as death 5 hours later. The protein is Nematocyst expressed protein 3 of Nematostella vectensis (Starlet sea anemone).